We begin with the raw amino-acid sequence, 417 residues long: Gamma-glutamyl phosphate reductase (417 aa).

Belongs to the gamma-glutamyl phosphate reductase family.

It is found in the cytoplasm. The catalysed reaction is L-glutamate 5-semialdehyde + phosphate + NADP(+) = L-glutamyl 5-phosphate + NADPH + H(+). The protein operates within amino-acid biosynthesis; L-proline biosynthesis; L-glutamate 5-semialdehyde from L-glutamate: step 2/2. Catalyzes the NADPH-dependent reduction of L-glutamate 5-phosphate into L-glutamate 5-semialdehyde and phosphate. The product spontaneously undergoes cyclization to form 1-pyrroline-5-carboxylate. The protein is Gamma-glutamyl phosphate reductase of Desulfitobacterium hafniense (strain Y51).